The chain runs to 417 residues: 3-oxo-isoapionate-4-phosphate decarboxylase (417 aa).

Residues K177, D179, and E180 each contribute to the Mg(2+) site. An N6-carboxylysine modification is found at K177.

It belongs to the RuBisCO large chain family. It depends on Mg(2+) as a cofactor.

The enzyme catalyses 3-oxoisoapionate 4-phosphate + H(+) = L-erythrulose 1-phosphate + CO2. The protein operates within carbohydrate metabolism. In terms of biological role, involved in catabolism of D-apiose. Catalyzes the decarboxylation of 3-oxo-isoapionate 4-phosphate to L-erythrulose 1-phosphate. This is 3-oxo-isoapionate-4-phosphate decarboxylase from Rhizobium etli (strain ATCC 51251 / DSM 11541 / JCM 21823 / NBRC 15573 / CFN 42).